A 356-amino-acid polypeptide reads, in one-letter code: Histidinol-phosphate aminotransferase (356 aa).

Lys214 is modified (N6-(pyridoxal phosphate)lysine).

It belongs to the class-II pyridoxal-phosphate-dependent aminotransferase family. Histidinol-phosphate aminotransferase subfamily. As to quaternary structure, homodimer. Requires pyridoxal 5'-phosphate as cofactor.

It carries out the reaction L-histidinol phosphate + 2-oxoglutarate = 3-(imidazol-4-yl)-2-oxopropyl phosphate + L-glutamate. It functions in the pathway amino-acid biosynthesis; L-histidine biosynthesis; L-histidine from 5-phospho-alpha-D-ribose 1-diphosphate: step 7/9. In Shigella dysenteriae serotype 1 (strain Sd197), this protein is Histidinol-phosphate aminotransferase.